The sequence spans 347 residues: MRCRRLALGLGFSLLSGIALWSLWIYMETWLPFSYVPYYLPCPEIFNMKLQYKGEKPFQPVTRSPHPQPKLLEQRPTELLTLTPWLAPIVSEGTFNPELLQHIYQPLNLTIGLTVFAVGKYTRFVQHFLESAEQFFMQGYQVYYYIFTNDPAGIPRVPLGPGRLLSIIPIQRHSRWEEISTRRMETISRHIAQRAHREVDYLFCVDVDMVFRNPWGPETLGDLVAAIHPGYYAVPRQQFPYERRHISTAFVAENEGDFYYGGAVFGGRVAKVYEFTTGCHMAILADKANGIMAAWQEESHLNRRFISHKPSKVLSPEYLWDDRKPQPPSLKLIRFSTLDKATSWLRS.

At 1 to 5 (MRCRR) the chain is on the cytoplasmic side. A helical; Signal-anchor for type II membrane protein membrane pass occupies residues 6 to 26 (LALGLGFSLLSGIALWSLWIY). Topologically, residues 27–347 (METWLPFSYV…LDKATSWLRS (321 aa)) are lumenal. N108 is a glycosylation site (N-linked (GlcNAc...) asparagine). Substrate-binding positions include 116-121 (FAVGKY), 206-208 (DVD), and 228-231 (HPGY). Mn(2+)-binding residues include D206 and D208. E298 acts as the Nucleophile in catalysis.

The protein belongs to the glycosyltransferase 6 family. Requires Mn(2+) as cofactor.

Its subcellular location is the golgi apparatus membrane. It catalyses the reaction a globoside Gb4Cer (d18:1(4E)) + UDP-N-acetyl-alpha-D-galactosamine = a globoside Forssman (d18:1(4E)) + UDP + H(+). The catalysed reaction is a globoside Gb4Cer + UDP-N-acetyl-alpha-D-galactosamine = a globoside IV3GalNAc-Gb4Cer + UDP + H(+). The protein operates within protein modification; protein glycosylation. Functionally, catalyzes the formation of Forssman glycolipid via the addition of N-acetylgalactosamine (GalNAc) in alpha-1,3-linkage to GalNAcb-1,3Gala-1,4Galb-1,4GlcCer (Gb4Cer). Forssman glycolipid (also called Forssman antigen; FG) probably serves for adherence of some pathogens such as E.coli uropathogenic strains. The chain is Globoside alpha-1,3-N-acetylgalactosaminyltransferase 1 from Canis lupus familiaris (Dog).